We begin with the raw amino-acid sequence, 252 residues long: Phosphoglycolate phosphatase (252 aa).

Asp13 (nucleophile) is an active-site residue. Residues Asp13, Asp15, and Asp192 each coordinate Mg(2+).

Belongs to the HAD-like hydrolase superfamily. CbbY/CbbZ/Gph/YieH family. In terms of assembly, monomer. Mg(2+) serves as cofactor. Requires chloride as cofactor.

It carries out the reaction 2-phosphoglycolate + H2O = glycolate + phosphate. Its pathway is organic acid metabolism; glycolate biosynthesis; glycolate from 2-phosphoglycolate: step 1/1. Specifically catalyzes the dephosphorylation of 2-phosphoglycolate. Is involved in the dissimilation of the intracellular 2-phosphoglycolate formed during the DNA repair of 3'-phosphoglycolate ends, a major class of DNA lesions induced by oxidative stress. The protein is Phosphoglycolate phosphatase of Salmonella paratyphi A (strain ATCC 9150 / SARB42).